We begin with the raw amino-acid sequence, 164 residues long: F-box protein At4g05010 (164 aa).

The interval 38–57 is disordered; it reads SKRAPENDSPPVKRPSHETT. The 49-residue stretch at 61–109 folds into the F-box domain; the sequence is RSLLETLHQDILIRVLCHVDHEDLATLKRVSKTIRKAVIEAKKSHFDYS.

The chain is F-box protein At4g05010 from Arabidopsis thaliana (Mouse-ear cress).